Reading from the N-terminus, the 292-residue chain is ATP synthase gamma chain (292 aa).

This sequence belongs to the ATPase gamma chain family. In terms of assembly, F-type ATPases have 2 components, CF(1) - the catalytic core - and CF(0) - the membrane proton channel. CF(1) has five subunits: alpha(3), beta(3), gamma(1), delta(1), epsilon(1). CF(0) has three main subunits: a, b and c.

The protein localises to the cell inner membrane. Produces ATP from ADP in the presence of a proton gradient across the membrane. The gamma chain is believed to be important in regulating ATPase activity and the flow of protons through the CF(0) complex. The sequence is that of ATP synthase gamma chain from Magnetococcus marinus (strain ATCC BAA-1437 / JCM 17883 / MC-1).